A 265-amino-acid chain; its full sequence is Energy-coupling factor transporter transmembrane protein EcfT (265 aa).

5 consecutive transmembrane segments (helical) span residues 29–49 (IILFATLIFLANNTVTYAILI), 73–93 (VWILILFTVVLHIFITKGGTV), 110–130 (AIFISLRLGLLILISSLLTLT), 143–163 (LLGPLGKIGIPVHDIALMMSI), and 242–262 (FTWRDGIVAVVSVILVIVIGW).

Belongs to the energy-coupling factor EcfT family. Forms a stable energy-coupling factor (ECF) transporter complex composed of 2 membrane-embedded substrate-binding proteins (S component), 2 ATP-binding proteins (A component) and 2 transmembrane proteins (T component). May be able to interact with more than 1 S component at a time.

Its subcellular location is the cell membrane. Transmembrane (T) component of an energy-coupling factor (ECF) ABC-transporter complex. Unlike classic ABC transporters this ECF transporter provides the energy necessary to transport a number of different substrates. The protein is Energy-coupling factor transporter transmembrane protein EcfT of Brevibacillus brevis (strain 47 / JCM 6285 / NBRC 100599).